We begin with the raw amino-acid sequence, 798 residues long: MNKLKFLIILFITFLFNLKYINSLKQCKISVLLSGDWSDMGYNYQMNNARIKAESALNLEMSLCYKNLEVSIDLAKQAIEDSIKKGANFIVISSSVHTSIGYEYARLHRDKDIYWLIRGRGRPVPDDLPKVAVINFNTHLLHYTLGLVSGYLTTSGTVGFISPGPQILALANSNSFYLGALASRKNVTFLNAYTGSWYNPEVAYKASQMLISNGADFIGMSQDDMSVQKALMDSGKMALGITGFSNRLIWGSDIALSYITDWSDVFIKYAGHILNDTWPEYTDYYTTLAEGGSLLFDTFSYRVPSEVQKLVSLEIEKLKNSSYQPFRCNPMYSQINLNFDSNGCANDMEFKNTKLLLKGTDISKTINLGLYTIPIEFVDYSNSMKLGLTIVSGFCILFCIISMVLVIMFRHAKIIKSASPIFCLLILFGCIIIFSGCIIFSLSPTDGICGARVWLLSIGYTIFLGSLLVKNWRIWLLFDNPKLKKRSITNWKLYPFVAGILAADVLILALWQGLGDIRSESRIGIDSLTKYQYANVCSSNDQGSVALYILLVFHGIKLLAACFISFKIKAVDIEEFNESKPIASSIYIITFCLFIVIPLMVSPQSVASQVITIVVCAIVTTLISISLLFGSKFYMMATQGLALNQTFATNTKSSSFSLSLEKQKSKSNGLEFEDSDESEEKLPQIKNYSNSEIPNLQHNHSRLAHFSSDSCTSAEQDSKLDLENQNDENEIENNQNNQNNIVEDCQKVEKLEKDENLEKDENLEKDENLEKDNENQSIIQKKRLSKNFNQSEIDPDDV.

The signal sequence occupies residues M1 to S23. The Extracellular portion of the chain corresponds to L24–L388. Residues N186, N275, and N320 are each glycosylated (N-linked (GlcNAc...) asparagine). A helical membrane pass occupies residues T389–F409. Residues R410–S419 are Cytoplasmic-facing. Residues P420–F440 traverse the membrane as a helical segment. Residues S441–G447 lie on the Extracellular side of the membrane. A helical membrane pass occupies residues I448–L468. The Cytoplasmic segment spans residues V469 to Y494. A helical transmembrane segment spans residues P495 to G515. Residues D516 to V545 lie on the Extracellular side of the membrane. Residues A546 to F566 form a helical membrane-spanning segment. Residues K567–K580 lie on the Cytoplasmic side of the membrane. A helical membrane pass occupies residues P581–V601. Residues S602–Q609 are Extracellular-facing. A helical transmembrane segment spans residues V610 to G630. Residues S631–V798 lie on the Cytoplasmic side of the membrane. Residues A714 to K771 are a coiled coil. The span at E752 to E774 shows a compositional bias: basic and acidic residues. A disordered region spans residues E752–V798.

It in the N-terminal section; belongs to the BMP lipoprotein family. The protein in the C-terminal section; belongs to the G-protein coupled receptor 3 family. GABA-B receptor subfamily.

The protein resides in the membrane. Its subcellular location is the cytoplasm. The protein localises to the cell cortex. It localises to the perinuclear region. Its function is as follows. May play an important role in the terminal differentiation. The sequence is that of Metabotropic glutamate receptor-like protein A (grlA) from Dictyostelium discoideum (Social amoeba).